Consider the following 230-residue polypeptide: Isoprenyl transferase (230 aa).

D14 is a catalytic residue. D14 lines the Mg(2+) pocket. Substrate-binding positions include 15 to 18 (GNGR), W19, R27, H31, and 59 to 61 (STE). The active-site Proton acceptor is N62. Residues W63, R65, R175, and 181-183 (RIS) contribute to the substrate site. Residue E194 coordinates Mg(2+).

The protein belongs to the UPP synthase family. Homodimer. Mg(2+) serves as cofactor.

Its function is as follows. Catalyzes the condensation of isopentenyl diphosphate (IPP) with allylic pyrophosphates generating different type of terpenoids. This chain is Isoprenyl transferase, found in Fusobacterium nucleatum subsp. nucleatum (strain ATCC 25586 / DSM 15643 / BCRC 10681 / CIP 101130 / JCM 8532 / KCTC 2640 / LMG 13131 / VPI 4355).